The primary structure comprises 406 residues: Tubby-like F-box protein 3 (406 aa).

The 56-residue stretch at 50–105 (SCWASMPPELLRDVLMRIEQSEDTWPSRKNVVSCAGVCRNWREIVKEIVRVPELSS) folds into the F-box domain.

This sequence belongs to the TUB family. In terms of tissue distribution, ubiquitous at low levels. Not detected in mature siliques.

It is found in the cell membrane. The protein resides in the plastid. Its subcellular location is the nucleus. The protein localises to the nucleoplasm. It localises to the cytoplasm. In terms of biological role, involved in abiotic stress signaling. Tethered to plasma membrane (PM) and probably bound to phosphatidylinositol 4,5-bisphosphate. Abiotic stresses (drought, salt, H(2)O(2)) trigger phospholipase C mediated PM dislogement and plastidial and nucleocytosolic relocation of TULP3. In Arabidopsis thaliana (Mouse-ear cress), this protein is Tubby-like F-box protein 3.